The chain runs to 225 residues: MSMIQNDWLDSIGEEFHKPYYKQLYDFVKEEYSQTTIYPLAENIFNAFHFTPLSKVKVLILGQDPYHNVNQAHGLSFSVLPEQKDIPPSLQNIYKELQSDLGCFIPNNGYLKKWADQGVLLLNTVLTVRAHQANSHQGRGWEQFTNAIIQAVNQQDRPIVYLLWGKPAQSKIPMLTNPKHLILKAPHPSPLSSYRGFFGSKHFSQTNEFFNANGLEPIDWQIENI.

Aspartate 64 serves as the catalytic Proton acceptor.

The protein belongs to the uracil-DNA glycosylase (UDG) superfamily. UNG family.

It is found in the cytoplasm. It carries out the reaction Hydrolyzes single-stranded DNA or mismatched double-stranded DNA and polynucleotides, releasing free uracil.. Its function is as follows. Excises uracil residues from the DNA which can arise as a result of misincorporation of dUMP residues by DNA polymerase or due to deamination of cytosine. The protein is Uracil-DNA glycosylase of Lachnoclostridium phytofermentans (strain ATCC 700394 / DSM 18823 / ISDg) (Clostridium phytofermentans).